Reading from the N-terminus, the 388-residue chain is Probable nitrate transporter NarT (388 aa).

Transmembrane regions (helical) follow at residues 14–34, 45–65, 69–89, 98–118, 139–159, 161–181, 206–226, 242–262, 276–296, 297–317, 330–350, and 359–379; these read TLSL…MPMI, ISIV…PFGY, IIGA…PIFL, MLML…VGVT, GNLG…AIGW, STVR…FFLG, YYLS…GIFL, GIRA…GGII, FLFM…ILFT, VGCL…FKLV, GIVS…ITYV, and LAFI…WHLS.

It belongs to the major facilitator superfamily. Nitrate/nitrite porter (TC 2.A.1.8) family.

The protein resides in the cell membrane. Functionally, probably required for nitrate uptake under anoxic conditions. Also possibly involved in excretion of nitrite produced by the dissimilatory reduction of nitrate. The polypeptide is Probable nitrate transporter NarT (narT) (Staphylococcus carnosus (strain TM300)).